A 158-amino-acid chain; its full sequence is Probable host range protein 2-1 (158 aa).

This sequence belongs to the poxviridae C7 protein family.

Functionally, plays a role for multiplication of the virus in different cell types. This chain is Probable host range protein 2-1, found in Rabbit fibroma virus (strain Kasza) (RFV).